Consider the following 659-residue polypeptide: Nitrate import ATP-binding protein NrtC (659 aa).

In terms of domain architecture, ABC transporter spans 5–239 (LAVDHVHQVF…RPRQRLEMME (235 aa)). Residue 42–49 (GHSGCGKS) coordinates ATP. The segment at 255-278 (QQQRRAKRRAKAAAPAPAVAASQQ) is linker. The nrtA-like stretch occupies residues 279–659 (KTVRLGFLPG…VAPIPLATSA (381 aa)).

The protein belongs to the ABC transporter superfamily. Nitrate/nitrite/cyanate uptake transporter (NitT) (TC 3.A.1.16) family. As to quaternary structure, the complex is composed of two ATP-binding proteins (NrtC and NrtD), two transmembrane proteins (NrtB) and a solute-binding protein (NrtA).

The protein resides in the cell inner membrane. It catalyses the reaction nitrate(out) + ATP + H2O = nitrate(in) + ADP + phosphate + H(+). Its activity is regulated as follows. Transport is inhibited by ammonium. The C-terminal domain of NrtC is involved in the ammonium-promoted inhibition of the nitrate/nitrite transporter. In terms of biological role, part of the ABC transporter complex NrtABCD involved in nitrate uptake. The complex is probably also involved in nitrite transport. Probably responsible for energy coupling to the transport system. The chain is Nitrate import ATP-binding protein NrtC from Synechococcus elongatus (strain ATCC 33912 / PCC 7942 / FACHB-805) (Anacystis nidulans R2).